Consider the following 304-residue polypeptide: Large ribosomal subunit protein uL18z (304 aa).

Residues 285 to 304 form a disordered region; that stretch reads LNALNSSAGADDDDEEEDDE. Positions 294–304 are enriched in acidic residues; sequence ADDDDEEEDDE.

It belongs to the universal ribosomal protein uL18 family. In terms of assembly, component of the large ribosomal subunit (LSU).

The protein resides in the cytoplasm. The protein localises to the nucleus. Component of the ribosome, a large ribonucleoprotein complex responsible for the synthesis of proteins in the cell. The small ribosomal subunit (SSU) binds messenger RNAs (mRNAs) and translates the encoded message by selecting cognate aminoacyl-transfer RNA (tRNA) molecules. The large subunit (LSU) contains the ribosomal catalytic site termed the peptidyl transferase center (PTC), which catalyzes the formation of peptide bonds, thereby polymerizing the amino acids delivered by tRNAs into a polypeptide chain. The nascent polypeptides leave the ribosome through a tunnel in the LSU and interact with protein factors that function in enzymatic processing, targeting, and the membrane insertion of nascent chains at the exit of the ribosomal tunnel. The polypeptide is Large ribosomal subunit protein uL18z (RPL5A) (Oryza sativa subsp. japonica (Rice)).